The primary structure comprises 204 residues: Nascent polypeptide-associated complex subunit alpha-like protein 3 (204 aa).

Residues 1–23 (MTAEQKVELAAKLEEQKIDLDKP) are compositionally biased toward basic and acidic residues. 2 disordered regions span residues 1 to 68 (MTAE…AMLK) and 141 to 165 (GETS…EEGV). Residues 24 to 43 (EVEDDDDNDEDDSEDDDEAE) show a composition bias toward acidic residues. A Phosphoserine modification is found at S36. Residues 44 to 59 (GHDGEAGGRSKQSRSE) are compositionally biased toward basic and acidic residues. Residues 56 to 121 (SRSEKKSRKA…AKIEDLSSQL (66 aa)) enclose the NAC-A/B domain. Positions 141 to 152 (GETSSAATAAAV) are enriched in low complexity. Over residues 153 to 164 (QDDDDEEVDEEG) the composition is skewed to acidic residues. In terms of domain architecture, UBA spans 159-204 (EVDEEGVEPKDIELVMTQAGVSKPRAVKALKLANGDIVSAIMELTT).

The protein belongs to the NAC-alpha family.

Functionally, may promote appropriate targeting of ribosome-nascent polypeptide complexes. In Arabidopsis thaliana (Mouse-ear cress), this protein is Nascent polypeptide-associated complex subunit alpha-like protein 3.